The chain runs to 455 residues: tRNA modification GTPase MnmE (455 aa).

3 residues coordinate (6S)-5-formyl-5,6,7,8-tetrahydrofolate: K29, E91, and R131. The 153-residue stretch at 226–378 folds into the TrmE-type G domain; the sequence is GLKVALVGLP…LIQELLKLAG (153 aa). Residue N236 coordinates K(+). GTP contacts are provided by residues 236 to 241, 255 to 261, 280 to 283, and 341 to 344; these read NVGKSS, TDLPGTT, DTAG, and NKAD. Mg(2+) is bound at residue S240. 3 residues coordinate K(+): T255, L257, and T260. T261 is a Mg(2+) binding site. K455 provides a ligand contact to (6S)-5-formyl-5,6,7,8-tetrahydrofolate.

The protein belongs to the TRAFAC class TrmE-Era-EngA-EngB-Septin-like GTPase superfamily. TrmE GTPase family. In terms of assembly, homodimer. Heterotetramer of two MnmE and two MnmG subunits. K(+) serves as cofactor.

Its subcellular location is the cytoplasm. In terms of biological role, exhibits a very high intrinsic GTPase hydrolysis rate. Involved in the addition of a carboxymethylaminomethyl (cmnm) group at the wobble position (U34) of certain tRNAs, forming tRNA-cmnm(5)s(2)U34. The chain is tRNA modification GTPase MnmE from Prochlorococcus marinus (strain SARG / CCMP1375 / SS120).